The primary structure comprises 319 residues: Malate dehydrogenase (319 aa).

Residues 10 to 15 (GAGNIG) and D34 contribute to the NAD(+) site. Substrate-binding residues include R83 and R89. NAD(+)-binding positions include N96 and 119 to 121 (ITN). The substrate site is built by N121 and R152. The active-site Proton acceptor is H176.

The protein belongs to the LDH/MDH superfamily. MDH type 3 family.

The catalysed reaction is (S)-malate + NAD(+) = oxaloacetate + NADH + H(+). Functionally, catalyzes the reversible oxidation of malate to oxaloacetate. The polypeptide is Malate dehydrogenase (Francisella philomiragia subsp. philomiragia (strain ATCC 25017 / CCUG 19701 / FSC 153 / O#319-036)).